The sequence spans 172 residues: Adenine phosphoribosyltransferase (172 aa).

This sequence belongs to the purine/pyrimidine phosphoribosyltransferase family. In terms of assembly, homodimer.

Its subcellular location is the cytoplasm. It carries out the reaction AMP + diphosphate = 5-phospho-alpha-D-ribose 1-diphosphate + adenine. It participates in purine metabolism; AMP biosynthesis via salvage pathway; AMP from adenine: step 1/1. Catalyzes a salvage reaction resulting in the formation of AMP, that is energically less costly than de novo synthesis. The polypeptide is Adenine phosphoribosyltransferase (Clostridium acetobutylicum (strain ATCC 824 / DSM 792 / JCM 1419 / IAM 19013 / LMG 5710 / NBRC 13948 / NRRL B-527 / VKM B-1787 / 2291 / W)).